The sequence spans 418 residues: Histidine--tRNA ligase (418 aa).

Belongs to the class-II aminoacyl-tRNA synthetase family.

The protein resides in the cytoplasm. It carries out the reaction tRNA(His) + L-histidine + ATP = L-histidyl-tRNA(His) + AMP + diphosphate + H(+). This Methanococcus vannielii (strain ATCC 35089 / DSM 1224 / JCM 13029 / OCM 148 / SB) protein is Histidine--tRNA ligase.